The following is a 130-amino-acid chain: Holo-[acyl-carrier-protein] synthase (130 aa).

Mg(2+) contacts are provided by Asp8 and Glu62.

The protein belongs to the P-Pant transferase superfamily. AcpS family. The cofactor is Mg(2+).

It is found in the cytoplasm. It carries out the reaction apo-[ACP] + CoA = holo-[ACP] + adenosine 3',5'-bisphosphate + H(+). Its function is as follows. Transfers the 4'-phosphopantetheine moiety from coenzyme A to a Ser of acyl-carrier-protein. The chain is Holo-[acyl-carrier-protein] synthase from Acidovorax ebreus (strain TPSY) (Diaphorobacter sp. (strain TPSY)).